A 433-amino-acid chain; its full sequence is Enolase (433 aa).

Residue glutamine 167 coordinates (2R)-2-phosphoglycerate. Glutamate 209 serves as the catalytic Proton donor. Residues aspartate 246, glutamate 291, and aspartate 318 each contribute to the Mg(2+) site. (2R)-2-phosphoglycerate-binding residues include lysine 343, arginine 372, serine 373, and lysine 394. Lysine 343 acts as the Proton acceptor in catalysis.

Belongs to the enolase family. As to quaternary structure, component of the RNA degradosome, a multiprotein complex involved in RNA processing and mRNA degradation. Mg(2+) is required as a cofactor.

It localises to the cytoplasm. Its subcellular location is the secreted. It is found in the cell surface. The catalysed reaction is (2R)-2-phosphoglycerate = phosphoenolpyruvate + H2O. It functions in the pathway carbohydrate degradation; glycolysis; pyruvate from D-glyceraldehyde 3-phosphate: step 4/5. Functionally, catalyzes the reversible conversion of 2-phosphoglycerate (2-PG) into phosphoenolpyruvate (PEP). It is essential for the degradation of carbohydrates via glycolysis. In Aeromonas salmonicida (strain A449), this protein is Enolase.